A 447-amino-acid polypeptide reads, in one-letter code: C4-dicarboxylate transport protein (447 aa).

The next 10 membrane-spanning stretches (helical) occupy residues 21-41 (HLYV…YFAP), 57-77 (LVKM…IAGM), 92-112 (IYFL…VNIV), 141-161 (SLIG…LASG), 163-183 (ILQV…VGEA), 201-221 (LVAI…AYTV), 232-252 (LAML…IVLG), 320-340 (IYMT…LSWG), 345-365 (LLAV…AGFV), and 368-388 (AATL…IFGV).

It belongs to the dicarboxylate/amino acid:cation symporter (DAACS) (TC 2.A.23) family.

The protein localises to the cell inner membrane. Functionally, responsible for the transport of dicarboxylates such as succinate, fumarate, and malate from the periplasm across the membrane. This Granulibacter bethesdensis (strain ATCC BAA-1260 / CGDNIH1) protein is C4-dicarboxylate transport protein.